Here is a 233-residue protein sequence, read N- to C-terminus: Lipid A 4'-phosphatase (233 aa).

Residue Met1 is a topological domain, cytoplasmic. The helical transmembrane segment at 2–22 threads the bilayer; that stretch reads LLFWMWWALLAVFRAFPGIDI. At 23-60 the chain is on the extracellular side; sequence YFSQLFFVGADCDATAAAGNICGGFPYRDVAAFDLLRT. Residues 61-81 form a helical membrane-spanning segment; the sequence is VFFRLPYVVAIVMVWKLVECY. Residues 82-94 are Cytoplasmic-facing; the sequence is QQHGATFNAERAQ. The helical transmembrane segment at 95-115 threads the bilayer; that stretch reads KLKVALGTLLIGPVLLVNVVL. Residues 116–149 lie on the Extracellular side of the membrane; sequence KEHWGRPRPIQTDIFGGALHFAEAGSLAGKCVSN. The helical transmembrane segment at 150-170 threads the bilayer; that stretch reads CSFVSGEAASAGWLFCLLLFV. Over 171–176 the chain is Cytoplasmic; the sequence is PKSLRY. The chain crosses the membrane as a helical span at residues 177-197; it reads AVAAPLAAISILTPAMRLSFG. Over 198-200 the chain is Extracellular; it reads AHY. A helical membrane pass occupies residues 201-221; the sequence is LSDVVLGWLSSLVVFAALLAL. Topologically, residues 222-233 are cytoplasmic; it reads TESQQHQKNSEI.

This sequence belongs to the lipid A LpxF 4'-phosphatase family.

The protein resides in the cell inner membrane. Its pathway is bacterial outer membrane biogenesis; LPS lipid A biosynthesis. In terms of biological role, removes the 4'-phosphate moiety from lipid IV(A) (a tetraacylated precursor of lipid A). In Rhizobium leguminosarum, this protein is Lipid A 4'-phosphatase.